Consider the following 381-residue polypeptide: MAKRDYYEVLGVSRTASADELKKAYRTKAKELHPDRNADNPQAEAQFKEVNEAYDVLRDADKKAAYDRYGHAAFEGGMGGGARAGGYGQQGDFASAFSDVFEDLFGDFMGGRGGAPRSRAQRGSDLRYNLRVTLDEAYRGVQKTINVPASVACDACKGTGAEGGAEAVTCPTCSGMGKVRAQQGFFTVERTCPTCNGMGQIVKNPCKVCHGAGRVEKERSLSVNIPAGVETGTRIRLAGEGEAGMRGGPSGDLYIFIEVREHALFQRDGVHLFCRVPVSIAAAALGGEVEVPTIDGGSSRVKIPAGSQTGKQMRLRGKGMPALRGGGAGDMLIELAVETPVNLTARQKELLREFEKLSEDNNPEGKSFFSKVKGFWDGMTG.

The J domain maps to 5 to 70; that stretch reads DYYEVLGVSR…DKKAAYDRYG (66 aa). Residues 140–218 form a CR-type zinc finger; sequence GVQKTINVPA…CHGAGRVEKE (79 aa). Residues Cys-153, Cys-156, Cys-170, Cys-173, Cys-192, Cys-195, Cys-206, and Cys-209 each coordinate Zn(2+). CXXCXGXG motif repeat units follow at residues 153–160, 170–177, 192–199, and 206–213; these read CDACKGTG, CPTCSGMG, CPTCNGMG, and CKVCHGAG.

Belongs to the DnaJ family. Homodimer. It depends on Zn(2+) as a cofactor.

It is found in the cytoplasm. Its function is as follows. Participates actively in the response to hyperosmotic and heat shock by preventing the aggregation of stress-denatured proteins and by disaggregating proteins, also in an autonomous, DnaK-independent fashion. Unfolded proteins bind initially to DnaJ; upon interaction with the DnaJ-bound protein, DnaK hydrolyzes its bound ATP, resulting in the formation of a stable complex. GrpE releases ADP from DnaK; ATP binding to DnaK triggers the release of the substrate protein, thus completing the reaction cycle. Several rounds of ATP-dependent interactions between DnaJ, DnaK and GrpE are required for fully efficient folding. Also involved, together with DnaK and GrpE, in the DNA replication of plasmids through activation of initiation proteins. The chain is Chaperone protein DnaJ from Cereibacter sphaeroides (strain KD131 / KCTC 12085) (Rhodobacter sphaeroides).